A 227-amino-acid polypeptide reads, in one-letter code: MGASARLLRAVIMGAPGSGKGTVSSRITTHFELKHLSSGDLLRDNMLRGTEIGVLAKAFIDQGKLIPDDVMTRLALHELKNLTQYSWLLDGFPRTLPQAEALDRAYQIDTVINLNVPFEVIKQRLTARWIHPASGRVYNIEFNPPKTVGIDDLTGEPLIQREDDKPETVIKRLKAYEDQTKPVLEYYQKKGVLETFSGTETNKIWPYVYAFLQTKVPQRSQKASVTP.

GTP is bound by residues Gly-17, Gly-19, Lys-20, Gly-21, and Thr-22. At Lys-20 the chain carries N6-succinyllysine. Position 34 is an N6-acetyllysine (Lys-34). A Phosphoserine modification is found at Ser-37. The NMP stretch occupies residues 37–66 (SSGDLLRDNMLRGTEIGVLAKAFIDQGKLI). The AMP site is built by Ser-38 and Arg-43. Lys-57 carries the post-translational modification N6-succinyllysine. Lys-64 is a binding site for AMP. 2 positions are modified to N6-acetyllysine; alternate: Lys-64 and Lys-80. N6-succinyllysine; alternate is present on residues Lys-64 and Lys-80. 3 residues coordinate AMP: Gly-91, Arg-94, and Gln-98. The segment at 127–164 (ARWIHPASGRVYNIEFNPPKTVGIDDLTGEPLIQREDD) is LID. GTP is bound by residues Arg-128, Tyr-138, Asn-139, Arg-161, and Arg-172. Lys-174 and Lys-189 each carry N6-acetyllysine; alternate. N6-succinyllysine; alternate is present on residues Lys-174 and Lys-189. Position 201 (Thr-201) interacts with GTP. Lys-203 is modified (N6-acetyllysine).

It belongs to the adenylate kinase family. AK3 subfamily. Monomer. As to expression, highly expressed in heart, skeletal muscle and liver, moderately expressed in pancreas and kidney, and weakly expressed in placenta, brain and lung.

It localises to the mitochondrion matrix. The catalysed reaction is a ribonucleoside 5'-triphosphate + AMP = a ribonucleoside 5'-diphosphate + ADP. It carries out the reaction GTP + AMP = GDP + ADP. The enzyme catalyses ITP + AMP = IDP + ADP. Its activity is regulated as follows. Inhibited by ATP. Functionally, mitochondrial adenylate kinase with a specific GTP:AMP phosphotransferase activity. Could also use ITP as phosphate donor. Its physiological function is to recycle GTP into GDP which is necessary for the TCA cycle in the mitochondrial matrix. The protein is GTP:AMP phosphotransferase AK3, mitochondrial of Homo sapiens (Human).